The sequence spans 86 residues: Large ribosomal subunit protein bL27 (86 aa).

Positions 1 to 10 (MAQKKGGGST) are enriched in gly residues. The interval 1–22 (MAQKKGGGSTRNGRDSESKRLG) is disordered.

The protein belongs to the bacterial ribosomal protein bL27 family.

This Polynucleobacter asymbioticus (strain DSM 18221 / CIP 109841 / QLW-P1DMWA-1) (Polynucleobacter necessarius subsp. asymbioticus) protein is Large ribosomal subunit protein bL27.